The primary structure comprises 365 residues: Aminomethyltransferase (365 aa).

Belongs to the GcvT family. The glycine cleavage system is composed of four proteins: P, T, L and H.

It carries out the reaction N(6)-[(R)-S(8)-aminomethyldihydrolipoyl]-L-lysyl-[protein] + (6S)-5,6,7,8-tetrahydrofolate = N(6)-[(R)-dihydrolipoyl]-L-lysyl-[protein] + (6R)-5,10-methylene-5,6,7,8-tetrahydrofolate + NH4(+). Its function is as follows. The glycine cleavage system catalyzes the degradation of glycine. The polypeptide is Aminomethyltransferase (Halalkalibacterium halodurans (strain ATCC BAA-125 / DSM 18197 / FERM 7344 / JCM 9153 / C-125) (Bacillus halodurans)).